A 348-amino-acid chain; its full sequence is Alcohol dehydrogenase 2 (348 aa).

Ser-2 is subject to N-acetylserine. Positions 44, 67, 98, 101, 104, 112, and 154 each coordinate Zn(2+). Residues 178–184, Asp-202, Lys-207, 269–271, and Arg-341 contribute to the NAD(+) site; these read GAAGGLG and VGL.

This sequence belongs to the zinc-containing alcohol dehydrogenase family. Homotetramer. Zn(2+) is required as a cofactor.

It is found in the cytoplasm. The enzyme catalyses a primary alcohol + NAD(+) = an aldehyde + NADH + H(+). It carries out the reaction a secondary alcohol + NAD(+) = a ketone + NADH + H(+). The polypeptide is Alcohol dehydrogenase 2 (ADH2) (Kluyveromyces marxianus (Yeast)).